Reading from the N-terminus, the 308-residue chain is Taste receptor type 2 member 43 (308 aa).

Position 1 (methionine 1) is a topological domain, extracellular. A helical transmembrane segment spans residues 2–22; that stretch reads ITFLPIIFSILVVFTFVIGNF. The Cytoplasmic segment spans residues 23-46; the sequence is ANGFIALVNSIEWVKRQKISFADQ. The chain crosses the membrane as a helical span at residues 47–67; that stretch reads ILTALAVSRVGLLWILLLNWY. Residues 68-86 are Extracellular-facing; that stretch reads STVLNPAFYSVEVRTIAYN. A helical membrane pass occupies residues 87 to 107; that stretch reads LWAVINHFSNWLATSLSIFYL. At 108–126 the chain is on the cytoplasmic side; that stretch reads LKIANFSNLIFLHLRRRVK. A helical membrane pass occupies residues 127–147; it reads SVVLVILWGPLLFLVCHLFVV. At 148–178 the chain is on the extracellular side; that stretch reads NMNEIIQTKEYEGNMTWKSKLRSAMYLSNTT. 2 N-linked (GlcNAc...) asparagine glycosylation sites follow: asparagine 161 and asparagine 176. A helical transmembrane segment spans residues 179 to 199; that stretch reads VTILANLVPFILTLISFLLLI. The Cytoplasmic portion of the chain corresponds to 200–229; that stretch reads CSLCKHLKKMQLRDKGSQDPSTKVHIKALQ. Residues 230 to 249 traverse the membrane as a helical segment; sequence TVISLSLCAIYFLSIMISSW. At 250 to 258 the chain is on the extracellular side; the sequence is SLGRVENKA. A helical transmembrane segment spans residues 259 to 279; the sequence is IFMFCKAIRFSYPSAHAFILI. Residues 280-308 are Cytoplasmic-facing; it reads WGNKKLKQTLLSVLWNVRYCVKGQKLQSP.

Belongs to the G-protein coupled receptor T2R family.

It is found in the membrane. It localises to the cell projection. The protein resides in the cilium membrane. Gustducin-coupled receptor immplicated in the perception of bitter compounds in the oral cavity and the gastrointestinal tract. Signals through PLCB2 and the calcium-regulated cation channel TRPM5. Activated by the sulfonyl amide sweeteners saccharin and acesulfame K. In airway epithelial cells, binding of bitter compounds increases the intracellular calcium ion concentration and stimulates ciliary beat frequency. May act as chemosensory receptors in airway epithelial cells to detect and eliminate potential noxious agents from the airways. This is Taste receptor type 2 member 43 (TAS2R43) from Macaca mulatta (Rhesus macaque).